Reading from the N-terminus, the 132-residue chain is Secreted RxLR effector protein RXLR-C22 (132 aa).

An N-terminal signal peptide occupies residues 1 to 21 (MRSLVWAVIATLIVLTPFSEA). The RxLR-dEER motif lies at 56-74 (RKLQSDSVKKGDSTGLEER). An N-linked (GlcNAc...) asparagine glycan is attached at N116.

The protein belongs to the RxLR effector family.

Its subcellular location is the secreted. It is found in the host Golgi apparatus. In terms of biological role, secreted effector that does not suppress pattern-triggered immunity (PTI) in plant host. This Plasmopara halstedii (Downy mildew of sunflower) protein is Secreted RxLR effector protein RXLR-C22.